We begin with the raw amino-acid sequence, 209 residues long: Uracil phosphoribosyltransferase (209 aa).

Residues arginine 77, arginine 102, and 129-137 (DPMLATGVS) each bind 5-phospho-alpha-D-ribose 1-diphosphate. Uracil contacts are provided by residues isoleucine 192 and 197–199 (GDA). Aspartate 198 lines the 5-phospho-alpha-D-ribose 1-diphosphate pocket.

The protein belongs to the UPRTase family. The cofactor is Mg(2+).

The enzyme catalyses UMP + diphosphate = 5-phospho-alpha-D-ribose 1-diphosphate + uracil. The protein operates within pyrimidine metabolism; UMP biosynthesis via salvage pathway; UMP from uracil: step 1/1. Allosterically activated by GTP. Its function is as follows. Catalyzes the conversion of uracil and 5-phospho-alpha-D-ribose 1-diphosphate (PRPP) to UMP and diphosphate. This is Uracil phosphoribosyltransferase from Metamycoplasma arthritidis (strain 158L3-1) (Mycoplasma arthritidis).